The sequence spans 165 residues: Anterior gradient protein 3 (165 aa).

An N-terminal signal peptide occupies residues 1–20 (MLHSALALCLLLITVSSNLA). Positions 162–165 (QSEL) match the Prevents secretion from ER motif.

It belongs to the AGR family. In terms of assembly, interacts with LYPD3 and DAG1 (alphaDAG1). In terms of tissue distribution, expressed in the ciliated cells of the airway epithelium. Not detected in the mucous cells.

Its subcellular location is the endoplasmic reticulum. The protein localises to the cytoplasm. Required for calcium-mediated regulation of ciliary beat frequency and mucociliary clearance in the airway. Might be involved in the regulation of intracellular calcium in tracheal epithelial cells. This chain is Anterior gradient protein 3, found in Mus musculus (Mouse).